A 247-amino-acid polypeptide reads, in one-letter code: Golgi-associated RAB2 interactor protein 5A (247 aa).

A compositionally biased stretch (pro residues) spans Met1 to Gly16. 2 disordered regions span residues Met1–Arg22 and Gly60–Arg92.

The protein belongs to the GARIN family. In terms of assembly, interacts (via N-terminus) with RAB2B (in GTP-bound form).

The protein localises to the golgi apparatus. In terms of biological role, RAB2B effector protein which promotes cytosolic DNA-induced innate immune responses. Regulates IFN responses against DNA viruses by regulating the CGAS-STING signaling axis. The chain is Golgi-associated RAB2 interactor protein 5A from Homo sapiens (Human).